A 119-amino-acid chain; its full sequence is Large ribosomal subunit protein bL20 (119 aa).

Belongs to the bacterial ribosomal protein bL20 family.

Functionally, binds directly to 23S ribosomal RNA and is necessary for the in vitro assembly process of the 50S ribosomal subunit. It is not involved in the protein synthesizing functions of that subunit. This chain is Large ribosomal subunit protein bL20, found in Dichelobacter nodosus (strain VCS1703A).